Here is a 216-residue protein sequence, read N- to C-terminus: Thiamine-phosphate synthase (216 aa).

4-amino-2-methyl-5-(diphosphooxymethyl)pyrimidine contacts are provided by residues 40–44 (QLRIK) and N72. The Mg(2+) site is built by D73 and D92. Residue S111 coordinates 4-amino-2-methyl-5-(diphosphooxymethyl)pyrimidine. Position 137–139 (137–139 (TTT)) interacts with 2-[(2R,5Z)-2-carboxy-4-methylthiazol-5(2H)-ylidene]ethyl phosphate. K140 lines the 4-amino-2-methyl-5-(diphosphooxymethyl)pyrimidine pocket. 2-[(2R,5Z)-2-carboxy-4-methylthiazol-5(2H)-ylidene]ethyl phosphate contacts are provided by residues G169 and 189-190 (VS).

This sequence belongs to the thiamine-phosphate synthase family. The cofactor is Mg(2+).

It catalyses the reaction 2-[(2R,5Z)-2-carboxy-4-methylthiazol-5(2H)-ylidene]ethyl phosphate + 4-amino-2-methyl-5-(diphosphooxymethyl)pyrimidine + 2 H(+) = thiamine phosphate + CO2 + diphosphate. It carries out the reaction 2-(2-carboxy-4-methylthiazol-5-yl)ethyl phosphate + 4-amino-2-methyl-5-(diphosphooxymethyl)pyrimidine + 2 H(+) = thiamine phosphate + CO2 + diphosphate. The catalysed reaction is 4-methyl-5-(2-phosphooxyethyl)-thiazole + 4-amino-2-methyl-5-(diphosphooxymethyl)pyrimidine + H(+) = thiamine phosphate + diphosphate. The protein operates within cofactor biosynthesis; thiamine diphosphate biosynthesis; thiamine phosphate from 4-amino-2-methyl-5-diphosphomethylpyrimidine and 4-methyl-5-(2-phosphoethyl)-thiazole: step 1/1. Functionally, condenses 4-methyl-5-(beta-hydroxyethyl)thiazole monophosphate (THZ-P) and 2-methyl-4-amino-5-hydroxymethyl pyrimidine pyrophosphate (HMP-PP) to form thiamine monophosphate (TMP). The chain is Thiamine-phosphate synthase from Photorhabdus laumondii subsp. laumondii (strain DSM 15139 / CIP 105565 / TT01) (Photorhabdus luminescens subsp. laumondii).